The sequence spans 466 residues: 3-isopropylmalate dehydratase large subunit (466 aa).

[4Fe-4S] cluster contacts are provided by Cys349, Cys410, and Cys413.

It belongs to the aconitase/IPM isomerase family. LeuC type 1 subfamily. As to quaternary structure, heterodimer of LeuC and LeuD. [4Fe-4S] cluster serves as cofactor.

It catalyses the reaction (2R,3S)-3-isopropylmalate = (2S)-2-isopropylmalate. The protein operates within amino-acid biosynthesis; L-leucine biosynthesis; L-leucine from 3-methyl-2-oxobutanoate: step 2/4. Catalyzes the isomerization between 2-isopropylmalate and 3-isopropylmalate, via the formation of 2-isopropylmaleate. The polypeptide is 3-isopropylmalate dehydratase large subunit (Ruthia magnifica subsp. Calyptogena magnifica).